A 550-amino-acid polypeptide reads, in one-letter code: MTDLRSDTIRKGYERAPNRSLLRSLGVTDREIELPFIGIANAFNTIVPGHTHLRQLSDKVKEGIAAAGGVPFEFGVIGICDGIAMGHEGMRYSLPSRENIADSIELMVQAHRFDGLVCVGTCDKIVPGMLMAAVRTNIPTIVVTGGAMLPGSSGGKDLSLIDVFEGVGKVAAGTMEEDALKELECCAMPGCGSCQGLYTANTMACMTETMGMSLPGCAAVPAVEAAKLRIARESGEAIIPLVKKNSTARDIVTKKSLENAIRVDMALGGSTNTVLHLMAIATEAEIPLSLADFNRIADEIPHICHMLPAGPYSMQALYRAGGIPAVLKRLEKHLDDCPTVSGLSLYQVARNAMIKNEQVIRSLDAPVSPAGGLRILFGSLAPDGAVVKSAAVPKEIWKHTGPARVFESEEPAMAAILSRQIHEGDAVIIRNEGPRGGPGMPEMLSATSALMGVGYKNVVLITDGRFSGGTRGPCIGHVAPEAAVGGPIALVQDGDRIAVDLFMRTIDLLVDPEVLTSRKAAWKPVMRPVTGVLARYAKTVGQANLGAVLR.

Position 81 (aspartate 81) interacts with Mg(2+). Residue cysteine 122 coordinates [2Fe-2S] cluster. Aspartate 123 and lysine 124 together coordinate Mg(2+). At lysine 124 the chain carries N6-carboxylysine. Residue cysteine 194 coordinates [2Fe-2S] cluster. Residue glutamate 442 participates in Mg(2+) binding. Serine 467 serves as the catalytic Proton acceptor.

The protein belongs to the IlvD/Edd family. In terms of assembly, homodimer. [2Fe-2S] cluster is required as a cofactor. The cofactor is Mg(2+).

It catalyses the reaction (2R)-2,3-dihydroxy-3-methylbutanoate = 3-methyl-2-oxobutanoate + H2O. The catalysed reaction is (2R,3R)-2,3-dihydroxy-3-methylpentanoate = (S)-3-methyl-2-oxopentanoate + H2O. The protein operates within amino-acid biosynthesis; L-isoleucine biosynthesis; L-isoleucine from 2-oxobutanoate: step 3/4. It participates in amino-acid biosynthesis; L-valine biosynthesis; L-valine from pyruvate: step 3/4. Functions in the biosynthesis of branched-chain amino acids. Catalyzes the dehydration of (2R,3R)-2,3-dihydroxy-3-methylpentanoate (2,3-dihydroxy-3-methylvalerate) into 2-oxo-3-methylpentanoate (2-oxo-3-methylvalerate) and of (2R)-2,3-dihydroxy-3-methylbutanoate (2,3-dihydroxyisovalerate) into 2-oxo-3-methylbutanoate (2-oxoisovalerate), the penultimate precursor to L-isoleucine and L-valine, respectively. This Methanoregula boonei (strain DSM 21154 / JCM 14090 / 6A8) protein is Dihydroxy-acid dehydratase.